A 298-amino-acid polypeptide reads, in one-letter code: N-acetylmuramic acid 6-phosphate etherase (298 aa).

The SIS domain maps to Ile-55–Lys-218. The active-site Proton donor is Glu-83. The active site involves Glu-114.

Belongs to the GCKR-like family. MurNAc-6-P etherase subfamily. Homodimer.

The enzyme catalyses N-acetyl-D-muramate 6-phosphate + H2O = N-acetyl-D-glucosamine 6-phosphate + (R)-lactate. It participates in amino-sugar metabolism; N-acetylmuramate degradation. Specifically catalyzes the cleavage of the D-lactyl ether substituent of MurNAc 6-phosphate, producing GlcNAc 6-phosphate and D-lactate. The protein is N-acetylmuramic acid 6-phosphate etherase of Mycolicibacterium smegmatis (strain ATCC 700084 / mc(2)155) (Mycobacterium smegmatis).